Consider the following 411-residue polypeptide: Zinc metalloproteinase/disintegrin (411 aa).

A signal peptide spans 1–20 (MIEVLLVTICLAVFPYQGSS). The propeptide occupies 21-190 (IILESGNVND…KASQLYLTPE (170 aa)). Positions 197 to 395 (RYVKLAIVVD…SKPQCILNAP (199 aa)) constitute a Peptidase M12B domain. Residue Asp-284 participates in Ca(2+) binding. 3 disulfide bridges follow: Cys-308–Cys-390, Cys-352–Cys-374, and Cys-354–Cys-357. His-333 lines the Zn(2+) pocket. Residue Glu-334 is part of the active site. Zn(2+)-binding residues include His-337 and His-343. Cys-390 and Asn-393 together coordinate Ca(2+). Residues 396 to 411 (LRTDTVSTPVSGNEPL) constitute a propeptide that is removed on maturation.

The protein belongs to the venom metalloproteinase (M12B) family. P-II subfamily. As to quaternary structure, monomer. Requires Zn(2+) as cofactor. Expressed by the venom gland.

Its subcellular location is the secreted. Its function is as follows. Snake venom metalloproteinase that impairs hemostasis in the envenomed animal. This is Zinc metalloproteinase/disintegrin from Protobothrops mucrosquamatus (Taiwan habu).